Reading from the N-terminus, the 143-residue chain is Transcriptional regulator MraZ (143 aa).

2 SpoVT-AbrB domains span residues 5 to 47 (QYEH…SLEE) and 76 to 119 (AVEC…SKEV).

It belongs to the MraZ family. In terms of assembly, forms oligomers.

It localises to the cytoplasm. The protein resides in the nucleoid. The protein is Transcriptional regulator MraZ of Thermoanaerobacter pseudethanolicus (strain ATCC 33223 / 39E) (Clostridium thermohydrosulfuricum).